The sequence spans 472 residues: Carboxypeptidase E (472 aa).

An N-terminal signal peptide occupies residues 1-21 (MLHAMRPVLLVAALLAVTAHA). The 321-residue stretch at 39–359 (HYHNQAQLEA…KSIFEYVWKS (321 aa)) folds into the Peptidase M14 domain. His101 and Glu104 together coordinate Zn(2+). An N-linked (GlcNAc...) asparagine glycan is attached at Asn134. Position 232 (His232) interacts with Zn(2+). The Proton donor/acceptor role is filled by Glu329. N-linked (GlcNAc...) asparagine glycans are attached at residues Asn385 and Asn428.

Belongs to the peptidase M14 family. Zn(2+) is required as a cofactor. Expression is restricted to the nervous system.

It is found in the cell projection. The protein resides in the axon. The protein localises to the perikaryon. It localises to the cytoplasmic vesicle. Its subcellular location is the secretory vesicle lumen. The catalysed reaction is Release of C-terminal arginine or lysine residues from polypeptides.. During FMRFamide-like peptide (FaRPs or FLP) and neuropeptide-like protein (NLP) precursor processing, catalyzes the removal of Arg or Lys residues from the C-terminus following the initial endoprotease cleavage. By processing neuropeptides, modulates basal acetylcholine release at the ventral cord neuromuscular junctions. Involved in egg-laying, defecation and locomotion. By processing FLP neuropeptides, regulates the turning step of male mating behavior. Involved in reducing pharyngeal pumping in response to high CO(2) levels. The polypeptide is Carboxypeptidase E (Caenorhabditis elegans).